Reading from the N-terminus, the 188-residue chain is MSIMSDKWIREAVINHKMIEPFAEKQVRVKDSEKIISYGLSSYGYDARVSNEFKIFTNINSTMVDPKNFDKYNLVDREVDVCIIPPNSFALGRTVEYFKIPRDVLVICVGKSTYARCGIIVNVTPLEPEWEGHVTLEFSNTTPLPAKIYANEGACQFLFLKGDQICDLSYADRQGKYMKQLGVTLPLT.

Residues 111–116, 135–137, Q156, Y170, K179, and Q180 each bind dCTP; these read KSTYAR and TLE. E137 (proton donor/acceptor) is an active-site residue.

Belongs to the dCTP deaminase family. As to quaternary structure, homotrimer.

It catalyses the reaction dCTP + H2O + H(+) = dUTP + NH4(+). The protein operates within pyrimidine metabolism; dUMP biosynthesis; dUMP from dCTP (dUTP route): step 1/2. Its function is as follows. Catalyzes the deamination of dCTP to dUTP. This chain is dCTP deaminase, found in Rickettsia bellii (strain OSU 85-389).